Reading from the N-terminus, the 308-residue chain is Ribosomal RNA small subunit methyltransferase H (308 aa).

Residues 38–40 (GGH), Asp-58, Phe-82, Asp-99, and Gln-106 each bind S-adenosyl-L-methionine.

This sequence belongs to the methyltransferase superfamily. RsmH family.

Its subcellular location is the cytoplasm. The catalysed reaction is cytidine(1402) in 16S rRNA + S-adenosyl-L-methionine = N(4)-methylcytidine(1402) in 16S rRNA + S-adenosyl-L-homocysteine + H(+). Functionally, specifically methylates the N4 position of cytidine in position 1402 (C1402) of 16S rRNA. This Acidovorax sp. (strain JS42) protein is Ribosomal RNA small subunit methyltransferase H.